Here is a 111-residue protein sequence, read N- to C-terminus: Entry-fusion complex protein OPG086 (111 aa).

The helical; Signal-anchor transmembrane segment at 1–21 (MASLLYFILFLLFVCISYYFT) threads the bilayer. Over 22–111 (YYPTNKLQAA…TLLPILLLSK (90 aa)) the chain is Virion surface.

Belongs to the orthopoxvirus OPG086 family. Interacts with OPG099/L5. Component of the entry fusion complex (EFC) composed of OPG053, OPG076, OPG086, OPG094, OPG095, OPG099, OPG107, OPG143, OPG104, OPG147 and OPG155. Except for OPG095 and OPG053, each of the EFC proteins is required for assembly or stability of the complex. Post-translationally, unglycosylated because produced in viral factories instead of the classic ER -Golgi route.

Its subcellular location is the virion membrane. Functionally, component of the entry fusion complex (EFC), which consists of 11 proteins. During cell infection, this complex mediates entry of the virion core into the host cytoplasm by a two-step mechanism consisting of lipid mixing of the viral and cellular membranes and subsequent pore formation. The polypeptide is Entry-fusion complex protein OPG086 (OPG086) (Variola virus (isolate Human/India/Ind3/1967) (VARV)).